The primary structure comprises 485 residues: Solute carrier family 35 member F4 (485 aa).

2 stretches are compositionally biased toward polar residues: residues 32–42 (SQKSTTRSSVT) and 50–64 (CPSSHSSISRQLSPL). Disordered stretches follow at residues 32-64 (SQKSTTRSSVTRCKPGPNCPSSHSSISRQLSPL) and 78-111 (QSRGSSGVCGRRVERQSRSGDDGTQTRPESSSQE). Residues 88–98 (RRVERQSRSGD) are compositionally biased toward basic and acidic residues. Polar residues predominate over residues 99–111 (DGTQTRPESSSQE). 10 helical membrane-spanning segments follow: residues 129–149 (IWGLLIILSVSSSWVGTTQIV), 156–176 (FYCPFFMTWFSTNWNIMFFPV), 217–234 (APFSILWTLTNYLYLLAL), 241–261 (DVSALFCCNKAFVFLLSWIVL), 265–285 (FMGVRIVAAIMAITGIVMMAY), 294–314 (IIGVAFAVGSASTSALYKVLF), 329–349 (FVSTLGFFNLIFISFTPIILY), 359–381 (FAALPWGCLCGMAGLWLAFNILV), 383–405 (VGVVLTYPILISIGTVLSVPGNA), and 414–434 (VIFNVVRLAATIIICIGFLLM). The EamA domain maps to 225 to 285 (LTNYLYLLAL…AITGIVMMAY (61 aa)).

Belongs to the SLC35F solute transporter family.

The protein resides in the membrane. Its function is as follows. Putative solute transporter. This Mus musculus (Mouse) protein is Solute carrier family 35 member F4 (Slc35f4).